An 82-amino-acid polypeptide reads, in one-letter code: RNA-binding protein Hfq (82 aa).

The 60-residue stretch at Asp9 to Val68 folds into the Sm domain.

It belongs to the Hfq family. In terms of assembly, homohexamer.

RNA chaperone that binds small regulatory RNA (sRNAs) and mRNAs to facilitate mRNA translational regulation in response to envelope stress, environmental stress and changes in metabolite concentrations. Also binds with high specificity to tRNAs. The polypeptide is RNA-binding protein Hfq (Pseudomonas aeruginosa (strain LESB58)).